The chain runs to 205 residues: Pyridoxal 5'-phosphate synthase subunit PdxT (205 aa).

Position 52 to 54 (52 to 54 (GES)) interacts with L-glutamine. Cys84 acts as the Nucleophile in catalysis. L-glutamine contacts are provided by residues Arg116 and 145 to 146 (IR). Active-site charge relay system residues include His185 and Glu187.

It belongs to the glutaminase PdxT/SNO family. In the presence of PdxS, forms a dodecamer of heterodimers. Only shows activity in the heterodimer.

The enzyme catalyses aldehydo-D-ribose 5-phosphate + D-glyceraldehyde 3-phosphate + L-glutamine = pyridoxal 5'-phosphate + L-glutamate + phosphate + 3 H2O + H(+). It catalyses the reaction L-glutamine + H2O = L-glutamate + NH4(+). It functions in the pathway cofactor biosynthesis; pyridoxal 5'-phosphate biosynthesis. Catalyzes the hydrolysis of glutamine to glutamate and ammonia as part of the biosynthesis of pyridoxal 5'-phosphate. The resulting ammonia molecule is channeled to the active site of PdxS. The polypeptide is Pyridoxal 5'-phosphate synthase subunit PdxT (Staphylothermus marinus (strain ATCC 43588 / DSM 3639 / JCM 9404 / F1)).